Consider the following 108-residue polypeptide: Small proline-rich protein 2H (108 aa).

Low complexity predominate over residues 1-11 (MSYQQQQCKQP). The segment at 1–22 (MSYQQQQCKQPCQPPPVCPPPQ) is disordered. Residues 12-22 (CQPPPVCPPPQ) show a composition bias toward pro residues. Repeat copies occupy residues 21–29 (PQCPEPCPP), 30–38 (PKCPEPCPP), 39–47 (PKCTEPCPP), 48–56 (PKCPEPCPP), 57–65 (PKCPEPCPP), 66–74 (PKCPEPCPP), and 75–83 (PKCTEPCPP). Residues 21 to 83 (PQCPEPCPPP…PPKCTEPCPP (63 aa)) are 7 X 9 AA tandem repeats of P-[KQ]-C-[PT]-E-P-C-P-P. Residues 83–108 (PPSYQQKCPSVQPSPPCQQKCPPKNK) are disordered. A compositionally biased stretch (low complexity) spans 87–108 (QQKCPSVQPSPPCQQKCPPKNK).

Belongs to the cornifin (SPRR) family. In terms of tissue distribution, expressed weakly in uterus.

It localises to the cytoplasm. Its function is as follows. Cross-linked envelope protein of keratinocytes. It is a keratinocyte protein that first appears in the cell cytosol, but ultimately becomes cross-linked to membrane proteins by transglutaminase. All that results in the formation of an insoluble envelope beneath the plasma membrane. The polypeptide is Small proline-rich protein 2H (Sprr2h) (Mus musculus (Mouse)).